We begin with the raw amino-acid sequence, 211 residues long: DELTA-stichotoxin-Hmg2a (211 aa).

Positions 1–19 (MNRLIVLFLIVTMICATIA) are cleaved as a signal peptide. A propeptide spanning residues 20-34 (VPSREELEDQKEYKR) is cleaved from the precursor. A plays an important role in the hemolytic activity region spans residues 37–46 (ALAGTIIEGA). The tract at residues 45–64 (GASLGFQILDKVLGELGKVS) is N-terminal region. Serine 88, valine 121, serine 139, proline 141, tyrosine 167, tyrosine 171, and tyrosine 172 together coordinate phosphocholine. A trp-rich region, which is important for the binding to lipid membrane region spans residues 139 to 154 (SVPFDYNFYSNWWDVK). The Cell attachment site, crucial for protein stability signature appears at 177 to 179 (RGD).

This sequence belongs to the actinoporin family. Sea anemone subfamily. Octamer or nonamer in membranes. Monomer in the soluble state.

It is found in the secreted. Its subcellular location is the nematocyst. The protein resides in the target cell membrane. Functionally, pore-forming protein that forms cations-selective hydrophilic pores of around 1 nm and causes cardiac stimulation and cytolysis. Pore formation is a multi-step process that involves specific recognition of membrane sphingomyelin (but neither cholesterol nor phosphatidylcholine) using aromatic rich region and adjacent phosphocholine (POC) binding site, firm binding to the membrane (mainly driven by hydrophobic interactions) accompanied by the transfer of the N-terminal region to the lipid-water interface and finally pore formation after oligomerization of monomers. This is DELTA-stichotoxin-Hmg2a from Heteractis magnifica (Magnificent sea anemone).